The following is a 288-amino-acid chain: MNTYLDLCRFIFQKGSFRKDRTNTGTKSVFGYQMRFNLEEGFPLLTTKKMNLRSIIHELLWFLKGDTNIFYLVQNNVNIWNEWPYQKYQQSDFFQNETLKEFVKKIKNDPLFATKHGNLGPVYGKQWRDFNGVDQIKFLISEIKANPNSRRLILNSWNPSLLNQMALPPCHVLIQFYVHQGKLSLQLYQRSGDVFLGIPFNIASYSLLLMMVAQVTNLQPYEFIHTLGDAHIYSNHITQVQTQIQRTPKKLPQMILNPDIKNIDDFKFIDFILKNYQCDGILKGDIAV.

Residue R21 participates in dUMP binding. N51 contributes to the (6R)-5,10-methylene-5,6,7,8-tetrahydrofolate binding site. 150–151 is a dUMP binding site; sequence RR. The active-site Nucleophile is C170. DUMP-binding positions include 190–193, N201, and 231–233; these read RSGD and HIY. D193 contacts (6R)-5,10-methylene-5,6,7,8-tetrahydrofolate. Residue A287 participates in (6R)-5,10-methylene-5,6,7,8-tetrahydrofolate binding.

It belongs to the thymidylate synthase family. Bacterial-type ThyA subfamily. Homodimer.

It is found in the cytoplasm. The enzyme catalyses dUMP + (6R)-5,10-methylene-5,6,7,8-tetrahydrofolate = 7,8-dihydrofolate + dTMP. It functions in the pathway pyrimidine metabolism; dTTP biosynthesis. Catalyzes the reductive methylation of 2'-deoxyuridine-5'-monophosphate (dUMP) to 2'-deoxythymidine-5'-monophosphate (dTMP) while utilizing 5,10-methylenetetrahydrofolate (mTHF) as the methyl donor and reductant in the reaction, yielding dihydrofolate (DHF) as a by-product. This enzymatic reaction provides an intracellular de novo source of dTMP, an essential precursor for DNA biosynthesis. The polypeptide is Thymidylate synthase (Aster yellows witches'-broom phytoplasma (strain AYWB)).